The sequence spans 89 residues: Translation initiation factor IF-1, chloroplastic (89 aa).

Positions 1–72 constitute an S1-like domain; sequence MKKQDLIDME…TKGRIIYRLR (72 aa).

Belongs to the IF-1 family. Component of the 30S ribosomal translation pre-initiation complex which assembles on the 30S ribosome in the order IF-2 and IF-3, IF-1 and N-formylmethionyl-tRNA(fMet); mRNA recruitment can occur at any time during PIC assembly.

Its subcellular location is the plastid. The protein resides in the chloroplast. One of the essential components for the initiation of protein synthesis. Stabilizes the binding of IF-2 and IF-3 on the 30S subunit to which N-formylmethionyl-tRNA(fMet) subsequently binds. Helps modulate mRNA selection, yielding the 30S pre-initiation complex (PIC). Upon addition of the 50S ribosomal subunit IF-1, IF-2 and IF-3 are released leaving the mature 70S translation initiation complex. In Angiopteris evecta (Mule's foot fern), this protein is Translation initiation factor IF-1, chloroplastic.